A 71-amino-acid chain; its full sequence is Exodeoxyribonuclease 7 small subunit (71 aa).

This sequence belongs to the XseB family. Heterooligomer composed of large and small subunits.

The protein localises to the cytoplasm. It carries out the reaction Exonucleolytic cleavage in either 5'- to 3'- or 3'- to 5'-direction to yield nucleoside 5'-phosphates.. Bidirectionally degrades single-stranded DNA into large acid-insoluble oligonucleotides, which are then degraded further into small acid-soluble oligonucleotides. In Streptococcus thermophilus (strain ATCC BAA-250 / LMG 18311), this protein is Exodeoxyribonuclease 7 small subunit.